We begin with the raw amino-acid sequence, 219 residues long: Small ribosomal subunit protein uS3 (219 aa).

The KH type-2 domain occupies I39 to K108.

The protein belongs to the universal ribosomal protein uS3 family. In terms of assembly, part of the 30S ribosomal subunit. Forms a tight complex with proteins S10 and S14.

Functionally, binds the lower part of the 30S subunit head. Binds mRNA in the 70S ribosome, positioning it for translation. The sequence is that of Small ribosomal subunit protein uS3 from Fusobacterium nucleatum subsp. nucleatum (strain ATCC 25586 / DSM 15643 / BCRC 10681 / CIP 101130 / JCM 8532 / KCTC 2640 / LMG 13131 / VPI 4355).